We begin with the raw amino-acid sequence, 362 residues long: Porin Omp2b (362 aa).

Positions Met1–Ala22 are cleaved as a signal peptide.

The protein belongs to the alphaproteobacteria porin family. Homotrimer.

The protein resides in the cell outer membrane. Forms passive diffusion pores that allow small molecular weight hydrophilic materials across the outer membrane. The polypeptide is Porin Omp2b (omp2b) (Brucella neotomae).